The primary structure comprises 991 residues: Mediator of RNA polymerase II transcription subunit 5 (991 aa).

This sequence belongs to the Mediator complex subunit 5 family. In terms of assembly, component of the Mediator complex.

It localises to the nucleus. Its function is as follows. Component of the Mediator complex, a coactivator involved in the regulated transcription of nearly all RNA polymerase II-dependent genes. Mediator functions as a bridge to convey information from gene-specific regulatory proteins to the basal RNA polymerase II transcription machinery. Mediator is recruited to promoters by direct interactions with regulatory proteins and serves as a scaffold for the assembly of a functional preinitiation complex with RNA polymerase II and the general transcription factors. This is Mediator of RNA polymerase II transcription subunit 5 (NUT1) from Yarrowia lipolytica (strain CLIB 122 / E 150) (Yeast).